We begin with the raw amino-acid sequence, 251 residues long: Ubiquinone/menaquinone biosynthesis C-methyltransferase UbiE (251 aa).

S-adenosyl-L-methionine contacts are provided by residues T74, D95, and 123 to 124; that span reads NA.

Belongs to the class I-like SAM-binding methyltransferase superfamily. MenG/UbiE family.

The catalysed reaction is a 2-demethylmenaquinol + S-adenosyl-L-methionine = a menaquinol + S-adenosyl-L-homocysteine + H(+). It catalyses the reaction a 2-methoxy-6-(all-trans-polyprenyl)benzene-1,4-diol + S-adenosyl-L-methionine = a 5-methoxy-2-methyl-3-(all-trans-polyprenyl)benzene-1,4-diol + S-adenosyl-L-homocysteine + H(+). It functions in the pathway quinol/quinone metabolism; menaquinone biosynthesis; menaquinol from 1,4-dihydroxy-2-naphthoate: step 2/2. The protein operates within cofactor biosynthesis; ubiquinone biosynthesis. In terms of biological role, methyltransferase required for the conversion of demethylmenaquinol (DMKH2) to menaquinol (MKH2) and the conversion of 2-polyprenyl-6-methoxy-1,4-benzoquinol (DDMQH2) to 2-polyprenyl-3-methyl-6-methoxy-1,4-benzoquinol (DMQH2). The chain is Ubiquinone/menaquinone biosynthesis C-methyltransferase UbiE from Shewanella putrefaciens (strain CN-32 / ATCC BAA-453).